We begin with the raw amino-acid sequence, 517 residues long: Ribose import ATP-binding protein RbsA 2 (517 aa).

ABC transporter domains are found at residues 11-251 (LEMR…VGRD) and 263-507 (YDPG…ALAT). 43–50 (GENGAGKS) provides a ligand contact to ATP.

It belongs to the ABC transporter superfamily. Ribose importer (TC 3.A.1.2.1) family. As to quaternary structure, the complex is composed of an ATP-binding protein (RbsA), two transmembrane proteins (RbsC) and a solute-binding protein (RbsB).

Its subcellular location is the cell inner membrane. The catalysed reaction is D-ribose(out) + ATP + H2O = D-ribose(in) + ADP + phosphate + H(+). In terms of biological role, part of the ABC transporter complex RbsABC involved in ribose import. Responsible for energy coupling to the transport system. The sequence is that of Ribose import ATP-binding protein RbsA 2 from Burkholderia pseudomallei (strain 1710b).